Consider the following 281-residue polypeptide: MTFFELVKALILGIVEGLTEFAPVSSTGHQILVDDMWLQTKYVLNSQESANTFKIVIQLGSIFAAAWIFRHRFLEVLHIEKTKTEGPRLNLLHIFIGLIPAGIMGLLFDDFIDKHLFSVPTVLIGLALGALLMIAADLFNKKVTHTTTVDEMTYKQALIIGVAQCLALWPGFSRSGSTISAGVLLKMNHKAASDFTFIMAVPIMFAASAKSLASNIQYIHSDQILFYIVGFIAAFIFGVLSIRLFLSLINRVKLMPFAIYRLILVAVIAVLYFGFGIGKGI.

A run of 7 helical transmembrane segments spans residues 49-69, 92-112, 116-136, 152-172, 196-216, 224-244, and 257-277; these read SANTFKIVIQLGSIFAAAWIF, LHIFIGLIPAGIMGLLFDDFI, LFSVPTVLIGLALGALLMIAA, MTYKQALIIGVAQCLALWPGF, TFIMAVPIMFAASAKSLASNI, ILFYIVGFIAAFIFGVLSIRL, and FAIYRLILVAVIAVLYFGFGI.

It belongs to the UppP family.

It is found in the cell membrane. It carries out the reaction di-trans,octa-cis-undecaprenyl diphosphate + H2O = di-trans,octa-cis-undecaprenyl phosphate + phosphate + H(+). In terms of biological role, catalyzes the dephosphorylation of undecaprenyl diphosphate (UPP). Confers resistance to bacitracin. In Macrococcus caseolyticus (strain JCSC5402) (Macrococcoides caseolyticum), this protein is Undecaprenyl-diphosphatase.